Reading from the N-terminus, the 166-residue chain is Xanthine-guanine phosphoribosyltransferase (166 aa).

5-phospho-alpha-D-ribose 1-diphosphate is bound by residues 42 to 43 (RG) and 99 to 107 (DDLTDTGKT). Asp100 serves as a coordination point for Mg(2+). Positions 103 and 146 each coordinate guanine. 2 residues coordinate xanthine: Asp103 and Ile146. GMP is bound by residues 103 to 107 (DTGKT) and 145 to 146 (WI).

It belongs to the purine/pyrimidine phosphoribosyltransferase family. XGPT subfamily. Homotetramer. Mg(2+) is required as a cofactor.

Its subcellular location is the cell inner membrane. The enzyme catalyses GMP + diphosphate = guanine + 5-phospho-alpha-D-ribose 1-diphosphate. It carries out the reaction XMP + diphosphate = xanthine + 5-phospho-alpha-D-ribose 1-diphosphate. The catalysed reaction is IMP + diphosphate = hypoxanthine + 5-phospho-alpha-D-ribose 1-diphosphate. Its pathway is purine metabolism; GMP biosynthesis via salvage pathway; GMP from guanine: step 1/1. The protein operates within purine metabolism; XMP biosynthesis via salvage pathway; XMP from xanthine: step 1/1. Its function is as follows. Purine salvage pathway enzyme that catalyzes the transfer of the ribosyl-5-phosphate group from 5-phospho-alpha-D-ribose 1-diphosphate (PRPP) to the N9 position of the 6-oxopurines guanine and xanthine to form the corresponding ribonucleotides GMP (guanosine 5'-monophosphate) and XMP (xanthosine 5'-monophosphate), with the release of PPi. To a lesser extent, also acts on hypoxanthine. The protein is Xanthine-guanine phosphoribosyltransferase of Mesorhizobium japonicum (strain LMG 29417 / CECT 9101 / MAFF 303099) (Mesorhizobium loti (strain MAFF 303099)).